The primary structure comprises 157 residues: Lipoprotein signal peptidase (157 aa).

3 helical membrane passes run 10-30 (LIFI…KYAI), 58-78 (FLEG…FIFL), and 84-104 (LFKN…SNVL). Residues Asp114 and Asp131 contribute to the active site. The chain crosses the membrane as a helical span at residues 122-142 (FDFAIFNFADVMIDVGVGVLL).

The protein belongs to the peptidase A8 family.

It localises to the cell inner membrane. The enzyme catalyses Release of signal peptides from bacterial membrane prolipoproteins. Hydrolyzes -Xaa-Yaa-Zaa-|-(S,diacylglyceryl)Cys-, in which Xaa is hydrophobic (preferably Leu), and Yaa (Ala or Ser) and Zaa (Gly or Ala) have small, neutral side chains.. It participates in protein modification; lipoprotein biosynthesis (signal peptide cleavage). This protein specifically catalyzes the removal of signal peptides from prolipoproteins. In Helicobacter pylori (strain Shi470), this protein is Lipoprotein signal peptidase.